The primary structure comprises 409 residues: bZIP transcription factor 16 (409 aa).

A compositionally biased stretch (basic and acidic residues) spans Met-1–Lys-16. Disordered regions lie at residues Met-1–Ser-63, Asn-118–Ser-236, Met-274–Gln-327, and Thr-362–Thr-409. Residues Ala-24–Ala-34 are compositionally biased toward low complexity. Positions Gly-133–Pro-145 are enriched in basic and acidic residues. Polar residues predominate over residues Ser-152–Tyr-178. Low complexity predominate over residues Ser-179 to Ser-203. Over residues Asn-216–Ala-228 the composition is skewed to polar residues. The bZIP domain maps to Glu-305–Leu-368. The Bipartite nuclear localization signal signature appears at Lys-307 to Arg-323. A basic motif region spans residues Lys-307–Lys-326. Residues Ser-314–Gln-327 show a composition bias toward basic and acidic residues. The interval Leu-333–Leu-368 is leucine-zipper. Positions Ala-398–Thr-409 are enriched in basic and acidic residues.

This sequence belongs to the bZIP family. Monomer, homodimer and heterodimers with BZIP68 and GBF1/BZIP41. Heterodimers with GBF2/BZIP54 and GBF3/BZIP55. Binds DNA as monomer and forms homo- and heterodimers. The monomeric form is redox regulated. Interacts with GIP1.

It is found in the nucleus. Its function is as follows. Transcriptional activator that binds to the G-box motif (5'-CACGTG-3') and other cis-acting elements with 5'-ACGT-3' core, such as Hex, C-box and as-1 motifs. Possesses high binding affinity to G-box, much lower affinity to Hex and C-box, and little affinity to as-1 element. G-box and G-box-like motifs are cis-acting elements defined in promoters of certain plant genes which are regulated by such diverse stimuli as light-induction or hormone control. Binds to the G-box motif 5'-CACGTG-3' of LHCB2.4 (At3g27690) promoter. May act as transcriptional repressor in light-regulated expression of LHCB2.4. Binds DNA as monomer. DNA-binding activity is redox-dependent. This is bZIP transcription factor 16 from Arabidopsis thaliana (Mouse-ear cress).